A 283-amino-acid polypeptide reads, in one-letter code: Protoheme IX farnesyltransferase 1 (283 aa).

The next 9 membrane-spanning stretches (helical) occupy residues 14–34 (IALM…TKVD), 35–55 (PVAL…SAVF), 84–104 (LGFA…NAAF), 107–127 (VVAL…TVWL), 133–153 (TNII…AAAV), 163–183 (VLAL…AILL), 208–228 (ILAN…LGLL), 231–251 (VYGF…VVLV), and 258–278 (WAGW…IAVF).

The protein belongs to the UbiA prenyltransferase family. Protoheme IX farnesyltransferase subfamily.

It localises to the cell inner membrane. It catalyses the reaction heme b + (2E,6E)-farnesyl diphosphate + H2O = Fe(II)-heme o + diphosphate. Its pathway is porphyrin-containing compound metabolism; heme O biosynthesis; heme O from protoheme: step 1/1. Converts heme B (protoheme IX) to heme O by substitution of the vinyl group on carbon 2 of heme B porphyrin ring with a hydroxyethyl farnesyl side group. The polypeptide is Protoheme IX farnesyltransferase 1 (Paramagnetospirillum magneticum (strain ATCC 700264 / AMB-1) (Magnetospirillum magneticum)).